A 341-amino-acid polypeptide reads, in one-letter code: B3 domain-containing transcription factor VRN1 (341 aa).

A DNA-binding region (TF-B3 1) is located at residues 5-98; it reads FFHKLIFSST…AFSVYIFNLS (94 aa). Positions 166–223 are disordered; that stretch reads GPVKAEEPTPTPKIPKKRGRKKKNADPEEINSSAPRDDDPENRSKFYESASARKRTVT. The span at 179–188 shows a compositional bias: basic residues; that stretch reads IPKKRGRKKK. The segment covering 200 to 211 has biased composition (basic and acidic residues); sequence PRDDDPENRSKF. The TF-B3 2 DNA-binding region spans 244 to 338; that stretch reads FRVVLRPSYL…VLKVTAFRVN (95 aa).

As to expression, expressed in roots and at lower levels in aerial parts.

The protein localises to the nucleus. Essential protein. Involved in the regulation of vernalization. Acts as a transcriptional repressor of FLC, a major target of the vernalization pathway. Binds DNA in vitro in a non-sequence-specific manner. The protein is B3 domain-containing transcription factor VRN1 of Arabidopsis thaliana (Mouse-ear cress).